The following is a 267-amino-acid chain: Phosphate import ATP-binding protein PstB 2 (267 aa).

The ABC transporter domain maps to 21–262 (LSTKDVHVYY…AKLQSTNDYV (242 aa)). 53-60 (GPSGSGKS) is an ATP binding site.

This sequence belongs to the ABC transporter superfamily. Phosphate importer (TC 3.A.1.7) family. The complex is composed of two ATP-binding proteins (PstB), two transmembrane proteins (PstC and PstA) and a solute-binding protein (PstS).

Its subcellular location is the cell membrane. It carries out the reaction phosphate(out) + ATP + H2O = ADP + 2 phosphate(in) + H(+). Functionally, part of the ABC transporter complex PstSACB involved in phosphate import. Responsible for energy coupling to the transport system. In Streptococcus pneumoniae (strain ATCC BAA-255 / R6), this protein is Phosphate import ATP-binding protein PstB 2.